A 180-amino-acid chain; its full sequence is dCTP deaminase (180 aa).

DCTP contacts are provided by residues 101 to 106 (KSSFAR) and Asp117. The active-site Proton donor/acceptor is Glu127. The dCTP site is built by Tyr159 and Gln168.

This sequence belongs to the dCTP deaminase family. Homotrimer.

The enzyme catalyses dCTP + H2O + H(+) = dUTP + NH4(+). It participates in pyrimidine metabolism; dUMP biosynthesis; dUMP from dCTP (dUTP route): step 1/2. Its function is as follows. Catalyzes the deamination of dCTP to dUTP. The protein is dCTP deaminase of Ignicoccus hospitalis (strain KIN4/I / DSM 18386 / JCM 14125).